The following is a 316-amino-acid chain: Deoxyribonuclease-1-like 1 (316 aa).

A signal peptide spans 1-28 (MHSSGGFQKAIHGHALLLLLLLASGAET). Catalysis depends on residues Glu107 and His158. Cys197 and Cys234 are disulfide-bonded. Residue Asn271 is glycosylated (N-linked (GlcNAc...) asparagine).

This sequence belongs to the DNase I family.

The protein resides in the endoplasmic reticulum. The chain is Deoxyribonuclease-1-like 1 (DNASE1L1) from Bos taurus (Bovine).